A 322-amino-acid chain; its full sequence is GRB2-related adaptor protein 2 (322 aa).

Residues 1 to 56 (MEATAKFDFMASGEDELSFRTGDILKILSNQEEWLKAELGSQEGYVPKNFIDIEFP) enclose the SH3 1 domain. Y45 is subject to Phosphotyrosine. The 92-residue stretch at 58–149 (WFHEGLSRHQ…QKQVFLRDGT (92 aa)) folds into the SH2 domain. K106 is modified (N6-acetyllysine). The disordered stretch occupies residues 143–216 (VFLRDGTQDQ…TPGPQPPQQQ (74 aa)). The segment covering 148-163 (GTQDQGHRGNSLDRRS) has biased composition (basic and acidic residues). S186 is modified (phosphoserine). A compositionally biased stretch (low complexity) spans 193–204 (PQQFHPHQQPSP). S230 bears the Phosphoserine mark. T254 is modified (phosphothreonine). The region spanning 263–322 (GRVRWARALYDFEALEEDELGFRSGEVVEVLDSSNPSWWTGRLHNKLGLFPANYVAPMMR) is the SH3 2 domain.

This sequence belongs to the GRB2/sem-5/DRK family. Interacts with phosphorylated LAT and LAX1 upon TCR activation. Interacts with SHB. Interacts with PTPN23. Interacts with phosphorylated LIME1 upon TCR activation.

It is found in the nucleus. Its subcellular location is the cytoplasm. The protein localises to the endosome. Its function is as follows. Interacts with SLP-76 to regulate NF-AT activation. Binds to tyrosine-phosphorylated shc. The polypeptide is GRB2-related adaptor protein 2 (Grap2) (Mus musculus (Mouse)).